Reading from the N-terminus, the 272-residue chain is Acetylglutamate kinase (272 aa).

Substrate is bound by residues 41–42 (GG), Arg-63, and Asn-166.

The protein belongs to the acetylglutamate kinase family. ArgB subfamily.

Its subcellular location is the cytoplasm. It catalyses the reaction N-acetyl-L-glutamate + ATP = N-acetyl-L-glutamyl 5-phosphate + ADP. It functions in the pathway amino-acid biosynthesis; L-arginine biosynthesis; N(2)-acetyl-L-ornithine from L-glutamate: step 2/4. In terms of biological role, catalyzes the ATP-dependent phosphorylation of N-acetyl-L-glutamate. The protein is Acetylglutamate kinase of Anaeromyxobacter dehalogenans (strain 2CP-1 / ATCC BAA-258).